Consider the following 467-residue polypeptide: uncharacterized protein (467 aa).

Lys290 carries the N6-(pyridoxal phosphate)lysine modification.

It belongs to the class-III pyridoxal-phosphate-dependent aminotransferase family. It depends on pyridoxal 5'-phosphate as a cofactor.

This is an uncharacterized protein from Sinorhizobium fredii (strain NBRC 101917 / NGR234).